Reading from the N-terminus, the 56-residue chain is Large ribosomal subunit protein bL32 (56 aa).

Positions 1–20 (MAVPKRRTSRSNTRSRRSQW) are enriched in basic residues. The disordered stretch occupies residues 1 to 24 (MAVPKRRTSRSNTRSRRSQWKAKV).

Belongs to the bacterial ribosomal protein bL32 family.

The chain is Large ribosomal subunit protein bL32 from Frankia casuarinae (strain DSM 45818 / CECT 9043 / HFP020203 / CcI3).